A 131-amino-acid polypeptide reads, in one-letter code: uncharacterized protein (131 aa).

Residues 14 to 130 (FLLIYSSLEV…RRLPASFLST (117 aa)) enclose the MSP domain.

This is an uncharacterized protein from Caenorhabditis elegans.